The following is a 327-amino-acid chain: GMP reductase (327 aa).

The active-site Thioimidate intermediate is the C176. An NADP(+)-binding site is contributed by 205–228; the sequence is IIADGGIRTHGDIAKSIRFGATMV.

Belongs to the IMPDH/GMPR family. GuaC type 2 subfamily.

The catalysed reaction is IMP + NH4(+) + NADP(+) = GMP + NADPH + 2 H(+). Its function is as follows. Catalyzes the irreversible NADPH-dependent deamination of GMP to IMP. It functions in the conversion of nucleobase, nucleoside and nucleotide derivatives of G to A nucleotides, and in maintaining the intracellular balance of A and G nucleotides. The chain is GMP reductase from Streptococcus equi subsp. zooepidemicus (strain H70).